The sequence spans 697 residues: SITS-binding protein (697 aa).

Residues 1–20 (MARRAKKMASNSGDSSPEPG) are disordered. The Cytoplasmic portion of the chain corresponds to 2–29 (ARRAKKMASNSGDSSPEPGIKEINETWK). Residues 30–50 (GAIACLGVALLFLMTIGVLYW) form a helical membrane-spanning segment. N-linked (GlcNAc...) asparagine glycans are attached at residues Asn112, Asn134, Asn162, Asn386, Asn405, and Asn470. 2 helical membrane passes run 503-521 (GLIP…FFIP) and 542-562 (WMQI…WVFG). A glycan (N-linked (GlcNAc...) asparagine) is linked at Asn568.

It belongs to the glycosyl hydrolase 31 family. As to quaternary structure, homodimer; disulfide-linked. As to expression, electroplax tissue, brain (200-fold less), and heart (500-fold less).

The protein resides in the membrane. Its function is as follows. This glycoprotein is probably not a functional part of the chloride channel. This Tetronarce californica (Pacific electric ray) protein is SITS-binding protein.